A 153-amino-acid chain; its full sequence is Superoxide dismutase [Cu-Zn] (153 aa).

Cu cation is bound by residues His46, His48, and His63. Cys57 and Cys146 are joined by a disulfide. The Zn(2+) site is built by His63, His71, His80, and Asp83. Residue His120 coordinates Cu cation.

Belongs to the Cu-Zn superoxide dismutase family. In terms of assembly, homodimer. The cofactor is Cu cation. Requires Zn(2+) as cofactor.

It is found in the cytoplasm. It carries out the reaction 2 superoxide + 2 H(+) = H2O2 + O2. Functionally, destroys radicals which are normally produced within the cells and which are toxic to biological systems. The polypeptide is Superoxide dismutase [Cu-Zn] (SODCC) (Solidago canadensis var. scabra (Tall goldenrod)).